The following is a 922-amino-acid chain: ATP-dependent helicase fft3 (922 aa).

2 disordered regions span residues 139–177 (EPKMPSYMDDEEASDSLPLSLSSQSLSSQVTNQKPAPHR) and 198–224 (PLSSRKTYEPEADDDSNDDMYSDDDSN). Over residues 153–166 (DSLPLSLSSQSLSS) the composition is skewed to low complexity. Positions 207 to 223 (PEADDDSNDDMYSDDDS) are enriched in acidic residues. A phosphoserine mark is found at Ser-213 and Ser-219. Residues 399 to 567 (YLLYELKLAG…ISLLAFILPH (169 aa)) enclose the Helicase ATP-binding domain. ATP is bound at residue 412–419 (DEMGLGKT). Positions 518–521 (DEGH) match the DEGH box motif. Position 617 is a phosphoserine (Ser-617). The Helicase C-terminal domain occupies 765–922 (KLKKLLTNAV…ETVEAEDDDD (158 aa)).

The protein belongs to the SNF2/RAD54 helicase family. Interacts with the GDP-bound form of spi1.

It is found in the nucleus. It localises to the chromosome. It catalyses the reaction ATP + H2O = ADP + phosphate + H(+). Functionally, DNA helicase that possesses intrinsic ATP-dependent nucleosome-remodeling activity and is required for heterochromatin organization. Required for maintaining a heterochromatin chromatin structure at centromeres and subtelomeres by protecting these regions from euchromatin assembly. Enhances the nucleotide exchange activity of the pim1 guanine nucleotide exchange factor and abolishes histone-H3-mediated RanGAP inhibition. Involved in the construction of the centromeres. The polypeptide is ATP-dependent helicase fft3 (fft3) (Schizosaccharomyces pombe (strain 972 / ATCC 24843) (Fission yeast)).